Consider the following 499-residue polypeptide: Maturase K (499 aa).

This sequence belongs to the intron maturase 2 family. MatK subfamily.

It localises to the plastid. Its subcellular location is the chloroplast. Its function is as follows. Usually encoded in the trnK tRNA gene intron. Probably assists in splicing its own and other chloroplast group II introns. The sequence is that of Maturase K from Camellia sasanqua (Christmas camellia).